Consider the following 954-residue polypeptide: Translation initiation factor IF-2 (954 aa).

Positions K56–A75 are enriched in low complexity. The tract at residues K56–N355 is disordered. Residues A76 to P87 show a composition bias toward pro residues. Low complexity-rich tracts occupy residues A88–A125 and P138–R151. Over residues P241 to G254 the composition is skewed to pro residues. Over residues G269–R322 the composition is skewed to gly residues. Basic residues predominate over residues G323–K332. The 172-residue stretch at P447 to L618 folds into the tr-type G domain. Positions G456–T463 are G1. Residue G456 to T463 coordinates GTP. Residues G481–H485 are G2. The segment at D506 to G509 is G3. GTP is bound by residues D506–H510 and N560–D563. Residues N560–D563 are G4. Residues S596–R598 form a G5 region.

It belongs to the TRAFAC class translation factor GTPase superfamily. Classic translation factor GTPase family. IF-2 subfamily.

The protein localises to the cytoplasm. Its function is as follows. One of the essential components for the initiation of protein synthesis. Protects formylmethionyl-tRNA from spontaneous hydrolysis and promotes its binding to the 30S ribosomal subunits. Also involved in the hydrolysis of GTP during the formation of the 70S ribosomal complex. This Pseudarthrobacter chlorophenolicus (strain ATCC 700700 / DSM 12829 / CIP 107037 / JCM 12360 / KCTC 9906 / NCIMB 13794 / A6) (Arthrobacter chlorophenolicus) protein is Translation initiation factor IF-2.